A 243-amino-acid polypeptide reads, in one-letter code: 4-hydroxy-tetrahydrodipicolinate reductase (243 aa).

NAD(+) is bound by residues 9–14 (GANGKM), 78–80 (GTS), and 104–107 (APNF). Residue His134 is the Proton donor/acceptor of the active site. His135 serves as a coordination point for (S)-2,3,4,5-tetrahydrodipicolinate. The active-site Proton donor is the Lys138. 144-145 (GT) is a binding site for (S)-2,3,4,5-tetrahydrodipicolinate.

It belongs to the DapB family.

The protein resides in the cytoplasm. It carries out the reaction (S)-2,3,4,5-tetrahydrodipicolinate + NAD(+) + H2O = (2S,4S)-4-hydroxy-2,3,4,5-tetrahydrodipicolinate + NADH + H(+). The catalysed reaction is (S)-2,3,4,5-tetrahydrodipicolinate + NADP(+) + H2O = (2S,4S)-4-hydroxy-2,3,4,5-tetrahydrodipicolinate + NADPH + H(+). Its pathway is amino-acid biosynthesis; L-lysine biosynthesis via DAP pathway; (S)-tetrahydrodipicolinate from L-aspartate: step 4/4. In terms of biological role, catalyzes the conversion of 4-hydroxy-tetrahydrodipicolinate (HTPA) to tetrahydrodipicolinate. In Legionella pneumophila (strain Paris), this protein is 4-hydroxy-tetrahydrodipicolinate reductase.